The following is a 217-amino-acid chain: MARIPGRPDYDALIKLLLVGDSGVGKSCLLLRFTDDMFTSSFITTIGIDFKIKKVDVDGKLVKLQIWDTAGQERFRTITSAYYRGAQGIILVYDITDEASFNNVRNWMRNIEQHASDNVNKILVGNKLDLAEDKRVVSIARGQALADEFGFRFYETSAKDNVHVEEAFIAVAKDVLARMEGEHANQQLLQQQQLSAAQPVRLTSGSPSPAQGKSCCR.

20-27 (GDSGVGKS) contributes to the GTP binding site. The short motif at 42–50 (FITTIGIDF) is the Effector region element. GTP contacts are provided by residues 68 to 72 (DTAGQ) and 126 to 129 (NKLD). The tract at residues 198 to 217 (QPVRLTSGSPSPAQGKSCCR) is disordered. Over residues 201 to 211 (RLTSGSPSPAQ) the composition is skewed to polar residues. S-geranylgeranyl cysteine attachment occurs at residues Cys-215 and Cys-216.

It belongs to the small GTPase superfamily. Rab family.

The protein resides in the cell membrane. Its function is as follows. Protein transport. Probably involved in vesicular traffic. The sequence is that of GTP-binding protein yptV2 (YPTV2) from Volvox carteri (Green alga).